The primary structure comprises 347 residues: Phenylalanine--tRNA ligase alpha subunit (347 aa).

Position 261 (glutamate 261) interacts with Mg(2+).

Belongs to the class-II aminoacyl-tRNA synthetase family. Phe-tRNA synthetase alpha subunit type 1 subfamily. As to quaternary structure, tetramer of two alpha and two beta subunits. Mg(2+) is required as a cofactor.

The protein resides in the cytoplasm. It catalyses the reaction tRNA(Phe) + L-phenylalanine + ATP = L-phenylalanyl-tRNA(Phe) + AMP + diphosphate + H(+). The protein is Phenylalanine--tRNA ligase alpha subunit of Streptococcus equi subsp. equi (strain 4047).